We begin with the raw amino-acid sequence, 187 residues long: Auxin-binding protein T92 (187 aa).

A signal peptide spans 1-20 (MARHIIILVAVFWFATAEAS). The cysteines at positions 22 and 177 are disulfide-linked. His78, His80, and Glu84 together coordinate Zn(2+). Asn117 carries N-linked (GlcNAc...) asparagine glycosylation. His128 provides a ligand contact to Zn(2+). The Prevents secretion from ER motif lies at 184–187 (KDEL).

As to quaternary structure, homodimer.

The protein localises to the endoplasmic reticulum lumen. In terms of biological role, this is probably a receptor for the plant hormone auxin. In Nicotiana tabacum (Common tobacco), this protein is Auxin-binding protein T92 (T92).